The chain runs to 897 residues: Translation initiation factor IF-2 (897 aa).

The disordered stretch occupies residues 52–310; it reads EHGSAPDKLT…LLQQGFQKPA (259 aa). Polar residues predominate over residues 68–82; sequence STLNVPGTGGKSKSV. 2 stretches are compositionally biased toward basic and acidic residues: residues 85–159 and 166–217; these read EVRK…KDKV and EMTK…ENEK. Over residues 256–272 the composition is skewed to basic residues; the sequence is GRTRTASKTARPQKKGN. Residues 273–286 are compositionally biased toward basic and acidic residues; the sequence is KHAESKADREEARA. Positions 396 to 565 constitute a tr-type G domain; it reads PRAPVVTIMG…LLQAEVLELK (170 aa). The interval 405-412 is G1; sequence GHVDHGKT. 405–412 lines the GTP pocket; sequence GHVDHGKT. Residues 430–434 are G2; the sequence is GITQH. Positions 451-454 are G3; that stretch reads DTPG. GTP is bound by residues 451–455 and 505–508; these read DTPGH and NKID. Residues 505–508 are G4; sequence NKID. The segment at 541–543 is G5; that stretch reads SAK.

It belongs to the TRAFAC class translation factor GTPase superfamily. Classic translation factor GTPase family. IF-2 subfamily.

The protein localises to the cytoplasm. Functionally, one of the essential components for the initiation of protein synthesis. Protects formylmethionyl-tRNA from spontaneous hydrolysis and promotes its binding to the 30S ribosomal subunits. Also involved in the hydrolysis of GTP during the formation of the 70S ribosomal complex. This Enterobacter cloacae protein is Translation initiation factor IF-2 (infB).